The following is a 453-amino-acid chain: F-box protein SKIP14 (453 aa).

Residues 34-104 form the F-box; degenerate domain; sequence RKNTGGDASS…NRQQLFAGLS (71 aa).

Part of a SCF (ASK-cullin-F-box) protein ligase complex. Interacts with CUL1, SKP1A/ASK1 and SPK1B/ASK2.

It functions in the pathway protein modification; protein ubiquitination. Component of SCF(ASK-cullin-F-box) E3 ubiquitin ligase complexes, which may mediate the ubiquitination and subsequent proteasomal degradation of target proteins. In Arabidopsis thaliana (Mouse-ear cress), this protein is F-box protein SKIP14 (SKIP14).